A 244-amino-acid chain; its full sequence is Phosphoadenosine 5'-phosphosulfate reductase (244 aa).

The active-site Nucleophile; cysteine thiosulfonate intermediate is the Cys-239.

Belongs to the PAPS reductase family. CysH subfamily.

The protein resides in the cytoplasm. It catalyses the reaction [thioredoxin]-disulfide + sulfite + adenosine 3',5'-bisphosphate + 2 H(+) = [thioredoxin]-dithiol + 3'-phosphoadenylyl sulfate. It participates in sulfur metabolism; hydrogen sulfide biosynthesis; sulfite from sulfate: step 3/3. Catalyzes the formation of sulfite from phosphoadenosine 5'-phosphosulfate (PAPS) using thioredoxin as an electron donor. This Zymomonas mobilis subsp. mobilis (strain ATCC 31821 / ZM4 / CP4) protein is Phosphoadenosine 5'-phosphosulfate reductase.